Here is a 296-residue protein sequence, read N- to C-terminus: F-box only protein 2 (296 aa).

The segment at 1–41 (MDGDGDPESVGQPEEASPEEQPEEASAEEERPEDQQEEEAA) is disordered. The span at 16 to 40 (ASPEEQPEEASAEEERPEDQQEEEA) shows a compositional bias: acidic residues. The 48-residue stretch at 44-91 (AAYLDELPEPLLLRVLAALPAAELVQACRLVCLRWKELVDGAPLWLLK) folds into the F-box domain. The FBA domain occupies 113–296 (FYFLSKRRRN…VTNSSVWVEP (184 aa)). Residues 210-212 (RSD) and 278-279 (YW) each bind a carbohydrate.

In terms of assembly, component of the SCF(FBXO2) complex consisting of CUL1, RBX1, SKP1 and FBXO2. Predominantly detected as heterodimer with SKP1; the heterodimer with SKP1 is not part of the SCF(FBXO2) complex.

The protein localises to the cytoplasm. Its subcellular location is the microsome membrane. The protein operates within protein modification; protein ubiquitination. Functionally, substrate recognition component of a SCF (SKP1-CUL1-F-box protein) E3 ubiquitin-protein ligase complex that mediates the ubiquitination and subsequent proteasomal degradation of target proteins. Involved in the endoplasmic reticulum-associated degradation pathway (ERAD) for misfolded lumenal proteins by recognizing and binding sugar chains on unfolded glycoproteins that are retrotranslocated into the cytosol and promoting their ubiquitination and subsequent degradation. Prevents formation of cytosolic aggregates of unfolded glycoproteins that have been retrotranslocated into the cytosol. Able to recognize and bind denatured glycoproteins, preferentially those of the high-mannose type. The chain is F-box only protein 2 (FBXO2) from Homo sapiens (Human).